The primary structure comprises 328 residues: Lipoyl synthase (328 aa).

[4Fe-4S] cluster-binding residues include Cys-56, Cys-61, Cys-67, Cys-82, Cys-86, Cys-89, and Ser-298. The Radical SAM core domain maps to 68–287 (WEDREATFLI…KEEAEEIGFS (220 aa)).

Belongs to the radical SAM superfamily. Lipoyl synthase family. It depends on [4Fe-4S] cluster as a cofactor.

The protein localises to the cytoplasm. The catalysed reaction is [[Fe-S] cluster scaffold protein carrying a second [4Fe-4S](2+) cluster] + N(6)-octanoyl-L-lysyl-[protein] + 2 oxidized [2Fe-2S]-[ferredoxin] + 2 S-adenosyl-L-methionine + 4 H(+) = [[Fe-S] cluster scaffold protein] + N(6)-[(R)-dihydrolipoyl]-L-lysyl-[protein] + 4 Fe(3+) + 2 hydrogen sulfide + 2 5'-deoxyadenosine + 2 L-methionine + 2 reduced [2Fe-2S]-[ferredoxin]. The protein operates within protein modification; protein lipoylation via endogenous pathway; protein N(6)-(lipoyl)lysine from octanoyl-[acyl-carrier-protein]: step 2/2. Catalyzes the radical-mediated insertion of two sulfur atoms into the C-6 and C-8 positions of the octanoyl moiety bound to the lipoyl domains of lipoate-dependent enzymes, thereby converting the octanoylated domains into lipoylated derivatives. The chain is Lipoyl synthase from Streptomyces avermitilis (strain ATCC 31267 / DSM 46492 / JCM 5070 / NBRC 14893 / NCIMB 12804 / NRRL 8165 / MA-4680).